Consider the following 275-residue polypeptide: Small ribosomal subunit protein uS2 (275 aa).

The tract at residues 232–256 (ARATDGKPEPEPVPGQELGADEPLA) is disordered.

This sequence belongs to the universal ribosomal protein uS2 family.

The protein is Small ribosomal subunit protein uS2 of Acidothermus cellulolyticus (strain ATCC 43068 / DSM 8971 / 11B).